A 142-amino-acid chain; its full sequence is Matrix protein (142 aa).

As to quaternary structure, homooligomer. Forms homotetramers. Interacts with phosphoprotein P. Binds to ssRNA.

The protein localises to the virion. The protein resides in the host cytoplasm. It localises to the host cell membrane. It is found in the host nucleus. Functionally, plays a crucial role in virion assembly and budding. This chain is Matrix protein (M), found in Borna disease virus (strain V) (BDV).